A 98-amino-acid polypeptide reads, in one-letter code: NADH-ubiquinone oxidoreductase chain 4L (98 aa).

A run of 3 helical transmembrane segments spans residues 1–21 (MASIYLNLMMAFLLALSGVLI), 26–46 (LMSTLLCLEGMMLSLFIMMTL), and 59–79 (APLILLVFSACEAGIGLALLV).

The protein belongs to the complex I subunit 4L family. Core subunit of respiratory chain NADH dehydrogenase (Complex I) which is composed of 45 different subunits.

It localises to the mitochondrion inner membrane. The enzyme catalyses a ubiquinone + NADH + 5 H(+)(in) = a ubiquinol + NAD(+) + 4 H(+)(out). Its function is as follows. Core subunit of the mitochondrial membrane respiratory chain NADH dehydrogenase (Complex I) which catalyzes electron transfer from NADH through the respiratory chain, using ubiquinone as an electron acceptor. Part of the enzyme membrane arm which is embedded in the lipid bilayer and involved in proton translocation. The protein is NADH-ubiquinone oxidoreductase chain 4L (MT-ND4L) of Caenolestes fuliginosus (Shrew opossum).